Reading from the N-terminus, the 131-residue chain is Fumarate reductase subunit C (131 aa).

2 consecutive transmembrane segments (helical) span residues 60 to 80 (FVGFLQNPVVLILNLIVLAAA) and 110 to 130 (IKGLWAVTAVVTAVVLFVALF).

This sequence belongs to the FrdC family. As to quaternary structure, part of an enzyme complex containing four subunits: a flavoprotein (FrdA), an iron-sulfur protein (FrdB), and two hydrophobic anchor proteins (FrdC and FrdD).

Its subcellular location is the cell inner membrane. Its function is as follows. Two distinct, membrane-bound, FAD-containing enzymes are responsible for the catalysis of fumarate and succinate interconversion; fumarate reductase is used in anaerobic growth, and succinate dehydrogenase is used in aerobic growth. Anchors the catalytic components of the fumarate reductase complex to the cell inner membrane, binds quinones. The protein is Fumarate reductase subunit C of Enterobacter sp. (strain 638).